Consider the following 614-residue polypeptide: Dihydroxy-acid dehydratase (614 aa).

Asp-81 contacts Mg(2+). Cys-122 serves as a coordination point for [2Fe-2S] cluster. Mg(2+)-binding residues include Asp-123 and Lys-124. Position 124 is an N6-carboxylysine (Lys-124). Cys-195 is a binding site for [2Fe-2S] cluster. Residue Glu-491 coordinates Mg(2+). The active-site Proton acceptor is the Ser-517.

This sequence belongs to the IlvD/Edd family. Homodimer. It depends on [2Fe-2S] cluster as a cofactor. Mg(2+) serves as cofactor.

The catalysed reaction is (2R)-2,3-dihydroxy-3-methylbutanoate = 3-methyl-2-oxobutanoate + H2O. It catalyses the reaction (2R,3R)-2,3-dihydroxy-3-methylpentanoate = (S)-3-methyl-2-oxopentanoate + H2O. Its pathway is amino-acid biosynthesis; L-isoleucine biosynthesis; L-isoleucine from 2-oxobutanoate: step 3/4. It functions in the pathway amino-acid biosynthesis; L-valine biosynthesis; L-valine from pyruvate: step 3/4. Functions in the biosynthesis of branched-chain amino acids. Catalyzes the dehydration of (2R,3R)-2,3-dihydroxy-3-methylpentanoate (2,3-dihydroxy-3-methylvalerate) into 2-oxo-3-methylpentanoate (2-oxo-3-methylvalerate) and of (2R)-2,3-dihydroxy-3-methylbutanoate (2,3-dihydroxyisovalerate) into 2-oxo-3-methylbutanoate (2-oxoisovalerate), the penultimate precursor to L-isoleucine and L-valine, respectively. The chain is Dihydroxy-acid dehydratase from Rhodopseudomonas palustris (strain BisA53).